The following is a 484-amino-acid chain: Vanillin dehydrogenase (484 aa).

Residues 156–157 (WN), 180–183 (KPAS), and 234–235 (GS) each bind NADP(+). NAD(+) contacts are provided by residues lysine 180 and 234-239 (GSTPVG). Glutamate 258 acts as the Proton acceptor in catalysis. Position 259 (leucine 259) interacts with NADP(+). Cysteine 292 acts as the Nucleophile in catalysis. Residues glutamine 339 and glutamate 386 each contribute to the NAD(+) site. Glutamate 386 serves as a coordination point for NADP(+).

It belongs to the aldehyde dehydrogenase family. As to quaternary structure, exists as a homodimer, homotrimer and homotetramer.

It carries out the reaction vanillin + NAD(+) + H2O = vanillate + NADH + 2 H(+). It catalyses the reaction vanillin + NADP(+) + H2O = vanillate + NADPH + 2 H(+). The enzyme catalyses 3,4-dihydroxybenzaldehyde + NAD(+) + H2O = 3,4-dihydroxybenzoate + NADH + 2 H(+). The catalysed reaction is 3,4-dihydroxybenzaldehyde + NADP(+) + H2O = 3,4-dihydroxybenzoate + NADPH + 2 H(+). It carries out the reaction 4-hydroxybenzaldehyde + NAD(+) + H2O = 4-hydroxybenzoate + NADH + 2 H(+). It catalyses the reaction 4-hydroxybenzaldehyde + NADP(+) + H2O = 4-hydroxybenzoate + NADPH + 2 H(+). In terms of biological role, catalyzes oxidation of vanillin to vanillate. Also oxidizes 3,4-dihydroxybenzaldehyde and 4-hydroxybenzaldehyde significantly. Other aromatic aldehyde substrates in the order of decreasing activity include 3-hydroxybenzaldehyde, 4-nitrobenzaldehyde, terephthalaldehyde, 2,4-dichlorobenzaldehyde, benzaldehyde and 3-phenylpropanal. Low activity with phthalaldehyde, cinnamaldehyde and syringaldehyde. No activity with phenylacetaldehyde, formaldehyde or aldehyde. Active with both NAD(+) and NADP(+). Involved in the degradation pathway of lignin-derived aromatic compounds of plant cell walls. Catalyzes the conversion of vanillin to vanillate due to toxicity of vanillin to the cells. This is Vanillin dehydrogenase from Corynebacterium glutamicum (strain ATCC 13032 / DSM 20300 / JCM 1318 / BCRC 11384 / CCUG 27702 / LMG 3730 / NBRC 12168 / NCIMB 10025 / NRRL B-2784 / 534).